The chain runs to 1674 residues: E3 ubiquitin-protein ligase SHPRH (1674 aa).

The tract at residues 1-26 is disordered; sequence MSSRRKRAPPMKVDEERQQQLHWNMH. A compositionally biased stretch (basic and acidic residues) spans 12-26; it reads KVDEERQQQLHWNMH. Residues S259 and S261 each carry the phosphoserine modification. The 83-residue stretch at 302–384 folds into the Helicase ATP-binding; first part domain; it reads YQREAVNWML…TVEVLALILT (83 aa). An ATP-binding site is contributed by 368–375; it reads DEMGLGKT. The H15 domain occupies 433–507; sequence HCPPTRVMIL…GFSGTFTLGK (75 aa). A disordered region spans residues 524 to 548; sequence SPRKIEKELRKSVNKDADSEYLPSN. Residues 526–541 show a composition bias toward basic and acidic residues; that stretch reads RKIEKELRKSVNKDAD. Position 626 is a phosphoserine (S626). A PHD-type zinc finger spans residues 649–700; sequence RFECICGEFDQIGHKPRVQCLKCHLWQHAKCVNYEEKNLKVKPFYCPHCLVA. One can recognise a Helicase ATP-binding; second part domain in the interval 701–859; sequence MEPVSTRATL…FGLVVFLGIE (159 aa). A DEAQ box motif is present at residues 810-813; it reads DEAQ. The RING-type zinc-finger motif lies at 1423 to 1470; the sequence is CPICARQLGKQWAVLTCGHCFCNECTSIIIEQYSVGSHRSSIKCAICR. The region spanning 1505 to 1663 is the Helicase C-terminal domain; it reads AVVRTLMKIQ…ASVLTVAGLA (159 aa).

This sequence belongs to the SNF2/RAD54 helicase family. Homodimer. Interacts with HLTF, PCNA, UBE2N and RAD18. As to expression, broadly expressed (at protein level).

The catalysed reaction is S-ubiquitinyl-[E2 ubiquitin-conjugating enzyme]-L-cysteine + [acceptor protein]-L-lysine = [E2 ubiquitin-conjugating enzyme]-L-cysteine + N(6)-ubiquitinyl-[acceptor protein]-L-lysine.. Its pathway is protein modification; protein ubiquitination. Its function is as follows. E3 ubiquitin-protein ligase involved in DNA repair. Upon genotoxic stress, accepts ubiquitin from the UBE2N-UBE2V2 E2 complex and transfers it to 'Lys-164' of PCNA which had been monoubiquitinated by UBE2A/B-RAD18, promoting the formation of non-canonical poly-ubiquitin chains linked through 'Lys-63'. The sequence is that of E3 ubiquitin-protein ligase SHPRH (Shprh) from Mus musculus (Mouse).